Consider the following 151-residue polypeptide: Large ribosomal subunit protein uL13 (151 aa).

The protein belongs to the universal ribosomal protein uL13 family. Part of the 50S ribosomal subunit.

In terms of biological role, this protein is one of the early assembly proteins of the 50S ribosomal subunit, although it is not seen to bind rRNA by itself. It is important during the early stages of 50S assembly. The chain is Large ribosomal subunit protein uL13 from Acaryochloris marina (strain MBIC 11017).